The chain runs to 113 residues: Cell division topological specificity factor (113 aa).

Belongs to the MinE family.

Prevents the cell division inhibition by proteins MinC and MinD at internal division sites while permitting inhibition at polar sites. This ensures cell division at the proper site by restricting the formation of a division septum at the midpoint of the long axis of the cell. This Methylobacterium radiotolerans (strain ATCC 27329 / DSM 1819 / JCM 2831 / NBRC 15690 / NCIMB 10815 / 0-1) protein is Cell division topological specificity factor.